A 287-amino-acid chain; its full sequence is Phosphatidylserine decarboxylase proenzyme (287 aa).

Active-site charge relay system; for autoendoproteolytic cleavage activity residues include D90, H147, and S253. S253 (schiff-base intermediate with substrate; via pyruvic acid; for decarboxylase activity) is an active-site residue. Pyruvic acid (Ser); by autocatalysis is present on S253.

It belongs to the phosphatidylserine decarboxylase family. PSD-B subfamily. Prokaryotic type I sub-subfamily. As to quaternary structure, heterodimer of a large membrane-associated beta subunit and a small pyruvoyl-containing alpha subunit. Requires pyruvate as cofactor. In terms of processing, is synthesized initially as an inactive proenzyme. Formation of the active enzyme involves a self-maturation process in which the active site pyruvoyl group is generated from an internal serine residue via an autocatalytic post-translational modification. Two non-identical subunits are generated from the proenzyme in this reaction, and the pyruvate is formed at the N-terminus of the alpha chain, which is derived from the carboxyl end of the proenzyme. The autoendoproteolytic cleavage occurs by a canonical serine protease mechanism, in which the side chain hydroxyl group of the serine supplies its oxygen atom to form the C-terminus of the beta chain, while the remainder of the serine residue undergoes an oxidative deamination to produce ammonia and the pyruvoyl prosthetic group on the alpha chain. During this reaction, the Ser that is part of the protease active site of the proenzyme becomes the pyruvoyl prosthetic group, which constitutes an essential element of the active site of the mature decarboxylase.

It localises to the cell membrane. It catalyses the reaction a 1,2-diacyl-sn-glycero-3-phospho-L-serine + H(+) = a 1,2-diacyl-sn-glycero-3-phosphoethanolamine + CO2. It functions in the pathway phospholipid metabolism; phosphatidylethanolamine biosynthesis; phosphatidylethanolamine from CDP-diacylglycerol: step 2/2. Its function is as follows. Catalyzes the formation of phosphatidylethanolamine (PtdEtn) from phosphatidylserine (PtdSer). The sequence is that of Phosphatidylserine decarboxylase proenzyme from Aliivibrio fischeri (strain MJ11) (Vibrio fischeri).